Here is a 1173-residue protein sequence, read N- to C-terminus: Alpha-mannosidase 2 (1173 aa).

The segment at 1–21 is disordered; that stretch reads MPFSSYIGNSRRSSTGGGTGG. Residues 1 to 50 lie on the Cytoplasmic side of the membrane; the sequence is MPFSSYIGNSRRSSTGGGTGGWGQSLLPTALSKSKLAINRKPRKRTLVVN. A helical; Signal-anchor transmembrane segment spans residues 51–71; that stretch reads FIFANFFVIALTVSLLFFLLT. The Lumenal segment spans residues 72–1173; the sequence is LFHFGVPGPI…AYKLELRPHK (1102 aa). Residue N106 is glycosylated (N-linked (GlcNAc...) asparagine). Zn(2+) is bound by residues H162 and D164. N-linked (GlcNAc...) asparagine glycosylation is present at N262. D276 contributes to the Zn(2+) binding site. The active-site Nucleophile is D276. N-linked (GlcNAc...) asparagine glycosylation occurs at N467. Residue H564 coordinates Zn(2+). 6 N-linked (GlcNAc...) asparagine glycosylation sites follow: N675, N772, N782, N991, N1098, and N1108.

This sequence belongs to the glycosyl hydrolase 38 family. As to quaternary structure, homodimer; disulfide-linked. Interacts with GALT1. Zn(2+) serves as cofactor. Post-translationally, glycosylated.

It is found in the golgi apparatus membrane. It catalyses the reaction N(4)-{beta-D-GlcNAc-(1-&gt;2)-alpha-D-Man-(1-&gt;3)-[alpha-D-Man-(1-&gt;3)-[alpha-D-Man-(1-&gt;6)]-alpha-D-Man-(1-&gt;6)]-beta-D-Man-(1-&gt;4)-beta-D-GlcNAc-(1-&gt;4)-beta-D-GlcNAc}-L-asparaginyl-[protein] + 2 H2O = 2 alpha-D-mannopyranose + an N(4)-{beta-D-GlcNAc-(1-&gt;2)-alpha-D-Man-(1-&gt;3)-[alpha-D-Man-(1-&gt;6)]-beta-D-Man-(1-&gt;4)-beta-D-GlcNAc-(1-&gt;4)-beta-D-GlcNAc}-L-asparaginyl-[protein]. The protein operates within protein modification; protein glycosylation. Inhibited by 1 mM Cu(2+) and by the class II alpha-mannosidase inhibitor swainsonine. In terms of biological role, catalyzes the first committed step in the biosynthesis of complex N-glycans. It controls conversion of high mannose to complex N-glycans; the final hydrolytic step in the N-glycan maturation pathway. Converts GlcNAcMan(5)GlcNAc(2) (Man5Gn) into GlcNAcMan(3)GlcNAc(2) (MGn) by sequential removal of two alpha1,6- and alpha1,3-linked mannose residues from the alpha1,6-mannose branch of the substrate. To a lesser extent, also able to cleave beta1,2-xylosylated Man5Gn-glycopeptide (Man5GnX-GP) and pyridylaminated substrates Man5Gn-PA and Man5GnX-PA, but not active toward Man5-glycopeptide. Required for resistance to salt stress. This Arabidopsis thaliana (Mouse-ear cress) protein is Alpha-mannosidase 2.